Reading from the N-terminus, the 136-residue chain is Histone H3 (136 aa).

The segment at 1 to 42 (MARTKQTARKSTGGKAPRKQLATKAAAKSAPATGGVKKPHRY) is disordered. K5 is modified (N6-methylated lysine). The residue at position 10 (K10) is an N6-acetyllysine; alternate. K10 is subject to N6-methylated lysine; alternate. S11 is modified (phosphoserine). N6-acetyllysine is present on residues K15 and K24. Positions 22-33 (ATKAAAKSAPAT) are enriched in low complexity. N6-methylated lysine occurs at positions 28, 37, and 80.

Belongs to the histone H3 family. As to quaternary structure, the nucleosome is a histone octamer containing two molecules each of H2A, H2B, H3 and H4 assembled in one H3-H4 heterotetramer and two H2A-H2B heterodimers. The octamer wraps approximately 147 bp of DNA. Acetylation is generally linked to gene activation. In terms of processing, methylation at Lys-5 is linked to gene activation. Methylation at Lys-10 is linked to gene repression.

The protein resides in the nucleus. It localises to the chromosome. Its function is as follows. Core component of nucleosome. Nucleosomes wrap and compact DNA into chromatin, limiting DNA accessibility to the cellular machineries which require DNA as a template. Histones thereby play a central role in transcription regulation, DNA repair, DNA replication and chromosomal stability. DNA accessibility is regulated via a complex set of post-translational modifications of histones, also called histone code, and nucleosome remodeling. This chain is Histone H3, found in Acropora formosa (Staghorn coral).